We begin with the raw amino-acid sequence, 416 residues long: Enterobactin exporter EntS (416 aa).

Residues methionine 1–alanine 21 are Cytoplasmic-facing. Residues valine 22 to valine 42 form a helical membrane-spanning segment. Over glutamine 43 to glycine 55 the chain is Periplasmic. A helical membrane pass occupies residues leucine 56 to alanine 76. Topologically, residues aspartate 77 to lysine 83 are cytoplasmic. Residues valine 84–leucine 104 traverse the membrane as a helical segment. Residues leucine 105–serine 109 lie on the Periplasmic side of the membrane. The chain crosses the membrane as a helical span at residues leucine 110–alanine 130. The Cytoplasmic portion of the chain corresponds to leucine 131–arginine 156. Residues leucine 157 to tryptophan 177 traverse the membrane as a helical segment. Position 178 (asparagine 178) is a topological domain, periplasmic. A helical transmembrane segment spans residues tyrosine 179–leucine 199. The Cytoplasmic segment spans residues proline 200–arginine 218. A helical transmembrane segment spans residues phenylalanine 219 to alanine 239. Residues serine 240 to serine 256 are Periplasmic-facing. A helical transmembrane segment spans residues alanine 257–threonine 277. Topologically, residues serine 278–proline 287 are cytoplasmic. A helical membrane pass occupies residues glycine 288–leucine 307. At methionine 308–leucine 313 the chain is on the periplasmic side. Residues glycine 314–leucine 336 traverse the membrane as a helical segment. At glutamine 337–asparagine 356 the chain is on the cytoplasmic side. Residues valine 357 to valine 377 form a helical membrane-spanning segment. A topological domain (periplasmic) is located at residue alanine 378. The chain crosses the membrane as a helical span at residues serine 379–valine 399. The Cytoplasmic segment spans residues glutamate 400 to serine 416.

The protein belongs to the major facilitator superfamily. EntS (TC 2.A.1.38) family.

The protein resides in the cell inner membrane. Its function is as follows. Component of an export pathway for enterobactin. The sequence is that of Enterobactin exporter EntS from Escherichia coli (strain K12 / MC4100 / BW2952).